A 427-amino-acid chain; its full sequence is 3-phosphoshikimate 1-carboxyvinyltransferase (427 aa).

3-phosphoshikimate contacts are provided by Lys20, Ser21, and Arg25. Position 20 (Lys20) interacts with phosphoenolpyruvate. 2 residues coordinate phosphoenolpyruvate: Gly92 and Arg120. Positions 166, 168, 312, and 339 each coordinate 3-phosphoshikimate. Phosphoenolpyruvate is bound at residue Gln168. Asp312 acts as the Proton acceptor in catalysis. Positions 343 and 385 each coordinate phosphoenolpyruvate.

The protein belongs to the EPSP synthase family. As to quaternary structure, monomer.

It is found in the cytoplasm. It catalyses the reaction 3-phosphoshikimate + phosphoenolpyruvate = 5-O-(1-carboxyvinyl)-3-phosphoshikimate + phosphate. It participates in metabolic intermediate biosynthesis; chorismate biosynthesis; chorismate from D-erythrose 4-phosphate and phosphoenolpyruvate: step 6/7. Catalyzes the transfer of the enolpyruvyl moiety of phosphoenolpyruvate (PEP) to the 5-hydroxyl of shikimate-3-phosphate (S3P) to produce enolpyruvyl shikimate-3-phosphate and inorganic phosphate. This chain is 3-phosphoshikimate 1-carboxyvinyltransferase, found in Streptococcus equi subsp. zooepidemicus (strain MGCS10565).